Consider the following 52-residue polypeptide: Transcriptional regulator SlrA (52 aa).

Positions M1–T38 constitute a Sin domain.

Component of the SlrR/SlrA complex.

Required specifically for induction of eps and yqxM operons by antagonizing SinR. Regulates SlrR activity. Controls the initiation of biofilm formation. The protein is Transcriptional regulator SlrA (slrA) of Bacillus subtilis (strain 168).